A 195-amino-acid polypeptide reads, in one-letter code: uncharacterized protein (195 aa).

Residues 143 to 195 form a disordered region; sequence NKLIETINTNRTNNTDNKSTKSKKQTETKKSLRTNKIVKQPINKSKKNIREEY. Low complexity predominate over residues 148 to 159; that stretch reads TINTNRTNNTDN.

This is an uncharacterized protein from Acanthamoeba polyphaga (Amoeba).